The following is a 399-amino-acid chain: PCI domain-containing protein 2 (399 aa).

A PCI domain is found at 210 to 391 (VTFKYYVGRK…QKLVVSKQNP (182 aa)).

Belongs to the CSN12 family.

The protein is PCI domain-containing protein 2 (pcid2) of Xenopus laevis (African clawed frog).